We begin with the raw amino-acid sequence, 1063 residues long: Cellulose synthase A catalytic subunit 7 [UDP-forming] (1063 aa).

The Cytoplasmic segment spans residues methionine 1–arginine 213. Zn(2+) contacts are provided by cysteine 18, cysteine 21, cysteine 37, cysteine 40, cysteine 45, cysteine 48, cysteine 60, and cysteine 63. The segment at cysteine 18–asparagine 64 adopts an RING-type; degenerate zinc-finger fold. The disordered stretch occupies residues asparagine 116–glutamate 154. Positions lysine 141 to glutamate 154 are enriched in basic and acidic residues. The helical transmembrane segment at isoleucine 214–proline 234 threads the bilayer. The Extracellular segment spans residues alanine 235–aspartate 237. The chain crosses the membrane as a helical span at residues alanine 238 to leucine 258. Over aspartate 259 to serine 845 the chain is Cytoplasmic. UDP-alpha-D-glucose is bound by residues serine 297, lysine 303, glutamate 304, and aspartate 333. The active site involves aspartate 333. The stretch at valine 387–lysine 414 forms a coiled coil. Lysine 474 provides a ligand contact to UDP-alpha-D-glucose. Residues lysine 475 and aspartate 499 each coordinate Mn(2+). Aspartate 762 is a catalytic residue. Residues isoleucine 846–isoleucine 866 form a helical membrane-spanning segment. The Extracellular segment spans residues proline 867–asparagine 871. A helical transmembrane segment spans residues leucine 872–leucine 892. The Cytoplasmic portion of the chain corresponds to arginine 893–glutamine 907. A helical transmembrane segment spans residues phenylalanine 908–valine 928. The Extracellular portion of the chain corresponds to leucine 929 to threonine 959. Asparagine 935 carries N-linked (GlcNAc...) asparagine glycosylation. A helical membrane pass occupies residues threonine 960–valine 980. Topologically, residues serine 981 to tryptophan 991 are cytoplasmic. The chain crosses the membrane as a helical span at residues glycine 992–leucine 1012. At lysine 1013–arginine 1021 the chain is on the extracellular side. A helical transmembrane segment spans residues threonine 1022–valine 1042. Over arginine 1043–cysteine 1063 the chain is Cytoplasmic.

It belongs to the glycosyltransferase 2 family. Plant cellulose synthase subfamily. The cofactor is Mn(2+). Requires Zn(2+) as cofactor.

It is found in the cell membrane. It catalyses the reaction [(1-&gt;4)-beta-D-glucosyl](n) + UDP-alpha-D-glucose = [(1-&gt;4)-beta-D-glucosyl](n+1) + UDP + H(+). The protein operates within glycan metabolism; plant cellulose biosynthesis. Its function is as follows. Catalytic subunit of cellulose synthase terminal complexes ('rosettes'), required for beta-1,4-glucan microfibril crystallization, a major mechanism of the cell wall formation. Involved in the secondary cell wall formation. This is Cellulose synthase A catalytic subunit 7 [UDP-forming] (CESA7) from Oryza sativa subsp. japonica (Rice).